The chain runs to 1094 residues: Formin-like protein 1 (1094 aa).

Disordered regions lie at residues 1–29, 173–199, and 507–627; these read MGNA…KQPM, SGAE…VPKS, and AATP…GVKA. A lipid anchor (N-myristoyl glycine) is attached at Gly2. Phosphoserine is present on Ser7. The span at 16–28 shows a compositional bias: pro residues; that stretch reads ASPPKQPAVPKQP. Residues 27-464 form the GBD/FH3 domain; the sequence is QPMPAAGELE…SRRIPEPEKV (438 aa). Position 184 is a phosphoserine (Ser184). A compositionally biased stretch (polar residues) spans 519–529; sequence RVSTDSPSTAE. Pro residues-rich tracts occupy residues 535 to 549 and 559 to 610; these read ASPP…PPLP and PSAP…PGGP. Positions 627-1018 constitute an FH2 domain; the sequence is AKKPIQTKFR…DTSGREEPPT (392 aa). Ser688 bears the Phosphoserine mark. Basic and acidic residues predominate over residues 1002-1017; it reads WKKEAAADTSGREEPP. The segment at 1002 to 1094 is disordered; that stretch reads WKKEAAADTS…PLPVTTDLAL (93 aa). Ser1021 is subject to Phosphoserine. One can recognise a DAD domain in the interval 1049–1082; that stretch reads SDRDGAIEDIITDLRNQPYIRADTGRRSARRRPP.

The protein belongs to the formin homology family. In terms of assembly, interacts with RAC1, PFN1 and PFN2. Interacts (activated by RAC1) with SRGAP2 (via SH3 domain); regulates the actin filament severing activity of FMNL1. Myristoylation mediates membrane localization. In terms of tissue distribution, highly expressed in the spleen, lymph node and bone marrow cells.

The protein localises to the cytoplasm. The protein resides in the cell membrane. It is found in the cytoplasmic vesicle. Its subcellular location is the phagosome. Functionally, plays a role in the regulation of cell morphology and cytoskeletal organization. Required in the cortical actin filament dynamics and cell shape. May play a role in the control of cell motility and survival of macrophages. In Mus musculus (Mouse), this protein is Formin-like protein 1 (Fmnl1).